The following is a 255-amino-acid chain: Thiazole synthase (255 aa).

Lys-95 (schiff-base intermediate with DXP) is an active-site residue. 1-deoxy-D-xylulose 5-phosphate contacts are provided by residues Gly-156, 182 to 183, and 204 to 205; these read AG and NT.

The protein belongs to the ThiG family. Homotetramer. Forms heterodimers with either ThiH or ThiS.

It localises to the cytoplasm. It catalyses the reaction [ThiS sulfur-carrier protein]-C-terminal-Gly-aminoethanethioate + 2-iminoacetate + 1-deoxy-D-xylulose 5-phosphate = [ThiS sulfur-carrier protein]-C-terminal Gly-Gly + 2-[(2R,5Z)-2-carboxy-4-methylthiazol-5(2H)-ylidene]ethyl phosphate + 2 H2O + H(+). The protein operates within cofactor biosynthesis; thiamine diphosphate biosynthesis. Its function is as follows. Catalyzes the rearrangement of 1-deoxy-D-xylulose 5-phosphate (DXP) to produce the thiazole phosphate moiety of thiamine. Sulfur is provided by the thiocarboxylate moiety of the carrier protein ThiS. In vitro, sulfur can be provided by H(2)S. This chain is Thiazole synthase, found in Vibrio campbellii (strain ATCC BAA-1116).